The following is a 332-amino-acid chain: Iron-utilization periplasmic protein (332 aa).

An N-terminal signal peptide occupies residues methionine 1–alanine 23. Fe cation-binding residues include histidine 32, glutamate 80, tyrosine 218, and tyrosine 219.

The protein belongs to the bacterial solute-binding protein 1 family. In terms of assembly, the complex is composed of two ATP-binding proteins (FbpC), two transmembrane proteins (FbpB) and a solute-binding protein (FbpA).

It is found in the periplasm. In terms of biological role, part of the ABC transporter complex FbpABC (TC 3.A.1.10.1) involved in Fe(3+) ions import. This protein specifically binds Fe(3+) and is involved in its transmembrane transport. This is Iron-utilization periplasmic protein (fbpA) from Haemophilus influenzae (strain ATCC 51907 / DSM 11121 / KW20 / Rd).